We begin with the raw amino-acid sequence, 429 residues long: Methylenetetrahydrofolate--tRNA-(uracil-5-)-methyltransferase TrmFO (429 aa).

Residue 7-12 (GAGLAG) coordinates FAD.

This sequence belongs to the MnmG family. TrmFO subfamily. The cofactor is FAD.

It localises to the cytoplasm. It carries out the reaction uridine(54) in tRNA + (6R)-5,10-methylene-5,6,7,8-tetrahydrofolate + NADH + H(+) = 5-methyluridine(54) in tRNA + (6S)-5,6,7,8-tetrahydrofolate + NAD(+). It catalyses the reaction uridine(54) in tRNA + (6R)-5,10-methylene-5,6,7,8-tetrahydrofolate + NADPH + H(+) = 5-methyluridine(54) in tRNA + (6S)-5,6,7,8-tetrahydrofolate + NADP(+). In terms of biological role, catalyzes the folate-dependent formation of 5-methyl-uridine at position 54 (M-5-U54) in all tRNAs. In Thermosipho africanus (strain TCF52B), this protein is Methylenetetrahydrofolate--tRNA-(uracil-5-)-methyltransferase TrmFO.